The primary structure comprises 241 residues: MSKRSKALRAADAKIDREKLYAPLEAVRLAKETSTSKFDGTVEVAFRLGVDPRKADQMVRGTVNLPHGTGKTARVLVFATGDRAEAARAAGADIVGSDELIDEVSKGRLDFDAVVATPDLMGKVGRLGRVLGPRGLMPNPKTGTVTPDVVKAVNEIKGGKIEFRVDKHSNLHFIIGKTSFDDTQLVENYGAALDEILRLKPSAAKGRYIKKAAISTTIGPGIPIDSNRTRNLLTEEDPAAV.

The protein belongs to the universal ribosomal protein uL1 family. Part of the 50S ribosomal subunit.

Its function is as follows. Binds directly to 23S rRNA. The L1 stalk is quite mobile in the ribosome, and is involved in E site tRNA release. Functionally, protein L1 is also a translational repressor protein, it controls the translation of the L11 operon by binding to its mRNA. The sequence is that of Large ribosomal subunit protein uL1 from Streptomyces avermitilis (strain ATCC 31267 / DSM 46492 / JCM 5070 / NBRC 14893 / NCIMB 12804 / NRRL 8165 / MA-4680).